An 88-amino-acid chain; its full sequence is Conotoxin VxVIB (88 aa).

A signal peptide spans methionine 1 to alanine 22. Positions alanine 23–glutamate 52 are excised as a propeptide. Disulfide bonds link cysteine 53/cysteine 68, cysteine 60/cysteine 72, and cysteine 67/cysteine 81.

In terms of tissue distribution, expressed by the venom duct.

It is found in the secreted. Its function is as follows. May act as a neurotoxin, but produces no obvious effect on ionic currents when tested on the mouse dorsal rooted ganglia (DRG). This is Conotoxin VxVIB from Conus vexillum (Flag cone).